Consider the following 668-residue polypeptide: MKHYAIQPANLEFNAEGTPVSRDFDDVYFSNDNGLEETRYVFLGGNQLEVRFPEHPHPLFVVAESGFGTGLNFLTLWQAFDQFREAHPQAQLQRLHFISFEKFPLTRADLALAHLHWPELTPWAEQLQAQWPMPLPGCHRLLLDEGRVTLDLWFGDINELTSQLDDSLNQKVDAWFLDGFAPAKNPDMWTQNLFNAMARLARPGGTLATFTSAGFVRRGLQEAGFTMQKRKGFGRKREMLCGVMEQALPLPCSTPWFNRTGSSKREAAIIGGGIASALLSLALLRRGWQVTLYCADEAPALGASGNRQGALYPLLSKHDEALNRFFSNAFTFARRFYDSLPVKFDHDWCSVTQLGWDEKSQHKIAQMLSMDLPADLAVAVGANEVEGVTGVVTNCGGITYPQGGWLCPAELTRSVLELAQQQGLQIRYQHQLQDLSRKDDGWLLNFAGDQQATHSVVVLANGHQISRFSQTSSLPVYSVAGQVSHIPTTPELAKLKQVLCYDGYLTPQNPANQHHCIGASYHRGSEDTAYSEDDQQQNRQRLIDCFPQAQWAKEVDVSEKEARCGVRCATRDHLPMVGNVPDYEATLVEYASLAEQKDKAVSAPVYDDLFMLAALGSRGLCSAPLCAEILAAQMSDEPIPMDASTLAALNPNRLWVRKLLKGKAVKAG.

A tRNA (mnm(5)s(2)U34)-methyltransferase region spans residues 1–245 (MKHYAIQPAN…KREMLCGVME (245 aa)). Residues 270–668 (IGGGIASALL…LLKGKAVKAG (399 aa)) are FAD-dependent cmnm(5)s(2)U34 oxidoreductase.

This sequence in the N-terminal section; belongs to the methyltransferase superfamily. tRNA (mnm(5)s(2)U34)-methyltransferase family. In the C-terminal section; belongs to the DAO family. The cofactor is FAD.

The protein resides in the cytoplasm. It carries out the reaction 5-aminomethyl-2-thiouridine(34) in tRNA + S-adenosyl-L-methionine = 5-methylaminomethyl-2-thiouridine(34) in tRNA + S-adenosyl-L-homocysteine + H(+). Functionally, catalyzes the last two steps in the biosynthesis of 5-methylaminomethyl-2-thiouridine (mnm(5)s(2)U) at the wobble position (U34) in tRNA. Catalyzes the FAD-dependent demodification of cmnm(5)s(2)U34 to nm(5)s(2)U34, followed by the transfer of a methyl group from S-adenosyl-L-methionine to nm(5)s(2)U34, to form mnm(5)s(2)U34. The chain is tRNA 5-methylaminomethyl-2-thiouridine biosynthesis bifunctional protein MnmC from Escherichia coli O139:H28 (strain E24377A / ETEC).